The primary structure comprises 140 residues: Large ribosomal subunit protein bL17 (140 aa).

It belongs to the bacterial ribosomal protein bL17 family. Part of the 50S ribosomal subunit. Contacts protein L32.

In Rhizobium etli (strain ATCC 51251 / DSM 11541 / JCM 21823 / NBRC 15573 / CFN 42), this protein is Large ribosomal subunit protein bL17.